Consider the following 59-residue polypeptide: UPF0337 protein PP_4561 (59 aa).

Over residues 27–43 the composition is skewed to basic and acidic residues; that stretch reads TDNEKLRAEGKAQELKG. The segment at 27 to 59 is disordered; sequence TDNEKLRAEGKAQELKGEAQQVKGNVKDAVKKP.

Belongs to the UPF0337 (CsbD) family.

This Pseudomonas putida (strain ATCC 47054 / DSM 6125 / CFBP 8728 / NCIMB 11950 / KT2440) protein is UPF0337 protein PP_4561.